A 324-amino-acid polypeptide reads, in one-letter code: D-erythronate dehydrogenase (324 aa).

3 residues coordinate NAD(+): serine 125, tyrosine 149, and lysine 153. Tyrosine 149 (proton acceptor) is an active-site residue.

The protein belongs to the NAD(P)-dependent epimerase/dehydratase family.

It catalyses the reaction D-erythronate + NAD(+) = 2-dehydro-D-erythronate + NADH + H(+). Functionally, catalyzes oxidation of D-erythronate to 2-oxo-tetronate. Can use either NAD(+) or NADP(+) as cosubstrate, with a preference for NAD(+). The chain is D-erythronate dehydrogenase from Cupriavidus necator (strain ATCC 17699 / DSM 428 / KCTC 22496 / NCIMB 10442 / H16 / Stanier 337) (Ralstonia eutropha).